The chain runs to 298 residues: Foldase protein PrsA 1 (298 aa).

Positions 1 to 19 are cleaved as a signal peptide; sequence MKKWLIALAGVLLTFTLAG. C20 carries N-palmitoyl cysteine lipidation. C20 is lipidated: S-diacylglycerol cysteine. In terms of domain architecture, PpiC spans 136–232; the sequence is EPKVTVQHIL…NGYEIIRMIK (97 aa).

It belongs to the PrsA family.

The protein resides in the cell membrane. The enzyme catalyses [protein]-peptidylproline (omega=180) = [protein]-peptidylproline (omega=0). In terms of biological role, plays a major role in protein secretion by helping the post-translocational extracellular folding of several secreted proteins. The polypeptide is Foldase protein PrsA 1 (prsA1) (Lactiplantibacillus plantarum (strain ATCC BAA-793 / NCIMB 8826 / WCFS1) (Lactobacillus plantarum)).